The sequence spans 138 residues: Basic phospholipase A2 homolog acutohaemolysin (138 aa).

Residues 1–16 form the signal peptide; it reads MRALWIVAVLLVGVEG. Intrachain disulfides connect C42/C131, C44/C60, C59/C111, C65/C138, C66/C104, C73/C97, and C91/C102. Residues 121 to 133 form an important for membrane-damaging activities in eukaryotes and bacteria; heparin-binding region; the sequence is KSFRYHLKPSCKK.

As to quaternary structure, monomer. Expressed by the venom gland.

Its subcellular location is the secreted. In terms of biological role, snake venom phospholipase A2 homolog that lacks enzymatic activity. Is myotoxic. Has a strong indirect hemolytic activity and anticoagulant activity. A model of myotoxic mechanism has been proposed: an apo Lys49-PLA2 is activated by the entrance of a hydrophobic molecule (e.g. fatty acid) at the hydrophobic channel of the protein leading to a reorientation of a monomer. This reorientation causes a transition between 'inactive' to 'active' states, causing alignment of C-terminal and membrane-docking sites (MDoS) side-by-side and putting the membrane-disruption sites (MDiS) in the same plane, exposed to solvent and in a symmetric position for both monomers. The MDoS region stabilizes the toxin on membrane by the interaction of charged residues with phospholipid head groups. Subsequently, the MDiS region destabilizes the membrane with penetration of hydrophobic residues. This insertion causes a disorganization of the membrane, allowing an uncontrolled influx of ions (i.e. calcium and sodium), and eventually triggering irreversible intracellular alterations and cell death. The chain is Basic phospholipase A2 homolog acutohaemolysin from Deinagkistrodon acutus (Hundred-pace snake).